The primary structure comprises 101 residues: NADH-quinone oxidoreductase subunit K (101 aa).

3 helical membrane-spanning segments follow: residues 4–24 (LSHF…GIFL), 30–50 (IVLL…FIAF), and 61–81 (VFVF…LAIL).

The protein belongs to the complex I subunit 4L family. NDH-1 is composed of 14 different subunits. Subunits NuoA, H, J, K, L, M, N constitute the membrane sector of the complex.

The protein localises to the cell inner membrane. The enzyme catalyses a quinone + NADH + 5 H(+)(in) = a quinol + NAD(+) + 4 H(+)(out). Its function is as follows. NDH-1 shuttles electrons from NADH, via FMN and iron-sulfur (Fe-S) centers, to quinones in the respiratory chain. The immediate electron acceptor for the enzyme in this species is believed to be ubiquinone. Couples the redox reaction to proton translocation (for every two electrons transferred, four hydrogen ions are translocated across the cytoplasmic membrane), and thus conserves the redox energy in a proton gradient. The polypeptide is NADH-quinone oxidoreductase subunit K (Thiobacillus denitrificans (strain ATCC 25259 / T1)).